The following is a 170-amino-acid chain: Ribosome-binding factor A (170 aa).

Residues 123 to 170 are disordered; sequence AKAGVYAGDEDPYVKPRVIGEDEDDDDEEGDEDGDDVDRSAPGYEPAH. The segment covering 143–158 has biased composition (acidic residues); the sequence is EDEDDDDEEGDEDGDD.

The protein belongs to the RbfA family. Monomer. Binds 30S ribosomal subunits, but not 50S ribosomal subunits or 70S ribosomes.

It localises to the cytoplasm. In terms of biological role, one of several proteins that assist in the late maturation steps of the functional core of the 30S ribosomal subunit. Associates with free 30S ribosomal subunits (but not with 30S subunits that are part of 70S ribosomes or polysomes). Required for efficient processing of 16S rRNA. May interact with the 5'-terminal helix region of 16S rRNA. The protein is Ribosome-binding factor A of Clavibacter sepedonicus (Clavibacter michiganensis subsp. sepedonicus).